A 437-amino-acid polypeptide reads, in one-letter code: Sodium/bile acid cotransporter 4 (437 aa).

Over 1-103 the chain is Extracellular; the sequence is MDSLDNTTLL…PPFWDTPLNH (103 aa). N-linked (GlcNAc...) asparagine glycosylation is found at N6 and N20. The disordered stretch occupies residues 15-79; sequence SLLPDNLTLS…SSSLTVGVAG (65 aa). The segment covering 22–41 has biased composition (polar residues); that stretch reads TLSPNAGSPSASTLSPLAVT. Positions 42-74 are enriched in low complexity; the sequence is SSPGPGLSLAPSPSIGFSPEATPTPEPTSSSLT. A helical transmembrane segment spans residues 104 to 124; the sequence is GLNVFVGAALCITMLGLGCTV. The Cytoplasmic segment spans residues 125–140; sequence DVNHFGAHVRRPVGAL. The helical transmembrane segment at 141–161 threads the bilayer; that stretch reads LAALCQFGFLPLLAFLLALIF. At 162 to 197 the chain is on the extracellular side; it reads KLDEVAAVAVLLCGCCPGGNLSNLMSLLVDGDMNLS. 2 N-linked (GlcNAc...) asparagine glycosylation sites follow: N181 and N195. Residues 198–218 form a helical membrane-spanning segment; that stretch reads IIMTISSTLLALVLMPLCLWI. Residues 219 to 233 are Cytoplasmic-facing; the sequence is YSRAWINTPLVQLLP. The chain crosses the membrane as a helical span at residues 234 to 254; sequence LGAVTLTLCSTLIPIGLGVFI. The Extracellular segment spans residues 255-267; that stretch reads RYKYNRVADYIVK. A helical membrane pass occupies residues 268–288; it reads VSLWSLLVTLVVLFIMTGTML. The Cytoplasmic portion of the chain corresponds to 289-291; sequence GPE. A helical membrane pass occupies residues 292-312; that stretch reads LLASIPATVYVVAIFMPLAGY. The Extracellular portion of the chain corresponds to 313-360; sequence ASGYGLATLFHLPPNCKRTVCLETGSQNVQLCTAILKLAFPPRFIGSM. A helical transmembrane segment spans residues 361–381; it reads YMFPLLYALFQSAEAGVFVLI. The Cytoplasmic segment spans residues 382-437; that stretch reads YKMYGSEILHKREALDEDEDTDISYKKLKEEEMADTSYGTVGTDDLVMMETTQTAL.

This sequence belongs to the bile acid:sodium symporter (BASS) (TC 2.A.28) family. Activated following N-terminal proteolytic cleavage by thrombin and/or proteases. As to expression, highest expression in the brain and significantly above background levels in the eye, prostate, and whole embryo tissue preparations.

The protein resides in the cell membrane. Transporter for bile acids. The chain is Sodium/bile acid cotransporter 4 (Slc10a4) from Mus musculus (Mouse).